A 255-amino-acid chain; its full sequence is ATP-dependent L-serine kinase (255 aa).

Residue Glu36 is part of the active site. Position 74 (Val74) interacts with O-phospho-L-serine. Asp75 contributes to the Mg(2+) binding site. Residues Gly76, His77, His78, Trp108, Lys234, Thr236, and His238 each coordinate O-phospho-L-serine.

It belongs to the SerK family. The cofactor is Mg(2+).

The catalysed reaction is L-serine + ATP = O-phospho-L-serine + ADP + H(+). Functionally, free serine kinase that uses ATP to phosphorylate L-serine to yield O-phospho-L-serine and ADP. This chain is ATP-dependent L-serine kinase, found in Desulfurococcus mucosus (strain ATCC 35584 / DSM 2162 / JCM 9187 / O7/1).